Here is a 321-residue protein sequence, read N- to C-terminus: Cilia- and flagella-associated protein 161 (321 aa).

Residues 275-321 (LSTMLDLPKPPAEDTRALEQEREQVSDPGARSTPDARGCVPQCTLPM) form a disordered region. Residues 285–299 (PAEDTRALEQEREQV) are compositionally biased toward basic and acidic residues.

Microtubule inner protein component of sperm flagellar doublet microtubules. Expressed in trachea multiciliated cells.

It is found in the cytoplasm. The protein localises to the cytoskeleton. The protein resides in the cilium axoneme. Its subcellular location is the flagellum axoneme. In terms of biological role, microtubule inner protein (MIP) part of the dynein-decorated doublet microtubules (DMTs) in cilia axoneme, which is required for motile cilia beating. The protein is Cilia- and flagella-associated protein 161 of Bos taurus (Bovine).